The sequence spans 402 residues: Cysteine desulfurase NifS (402 aa).

Pyridoxal 5'-phosphate contacts are provided by residues 72 to 73 (GT), asparagine 151, glutamine 179, and 199 to 201 (CGH). Lysine 202 is subject to N6-(pyridoxal phosphate)lysine. Threonine 237 is a binding site for pyridoxal 5'-phosphate. The active-site Cysteine persulfide intermediate is cysteine 325. [2Fe-2S] cluster is bound at residue cysteine 325.

The protein belongs to the class-V pyridoxal-phosphate-dependent aminotransferase family. NifS/IscS subfamily. Homodimer. It depends on pyridoxal 5'-phosphate as a cofactor.

It carries out the reaction (sulfur carrier)-H + L-cysteine = (sulfur carrier)-SH + L-alanine. With respect to regulation, inhibited by equimolar concentrations of p-chloromercuribenzoic acid, iodoacetamide or N-ethylmaleimide. Catalyzes the removal of elemental sulfur atoms from cysteine to produce alanine. Seems to participate in the biosynthesis of the nitrogenase metalloclusters by providing the inorganic sulfur required for the Fe-S core formation. This chain is Cysteine desulfurase NifS, found in Azotobacter vinelandii.